The following is an 839-amino-acid chain: AMP deaminase (839 aa).

A helical transmembrane segment spans residues 8-28; sequence LALAALFGASFVAVSGFFMHF. The disordered stretch occupies residues 40-167; sequence ERKENPDGDE…DDDDNLTNSE (128 aa). Residues 85–94 show a composition bias toward gly residues; sequence DGGGGGGGDT. Phosphoserine is present on residues Ser-134 and Ser-140. Positions 153 to 162 are enriched in acidic residues; the sequence is SVEESDDDDN. At Ser-203 the chain carries Phosphoserine. 289–296 lines the ATP pocket; it reads AHYPQGKS. Residues His-391 and His-393 each contribute to the Zn(2+) site. Residues His-393 and 462 to 467 contribute to the substrate site; that span reads KFNLKY. His-659 is a Zn(2+) binding site. Glu-662 contributes to the substrate binding site. Catalysis depends on His-681, which acts as the Proton acceptor. Asp-736 provides a ligand contact to Zn(2+). Residue 737 to 740 participates in substrate binding; the sequence is DPLQ.

The protein belongs to the metallo-dependent hydrolases superfamily. Adenosine and AMP deaminases family. As to quaternary structure, homodimer. Interacts with AHK4. Interacts with EER5. It depends on Zn(2+) as a cofactor. Expressed in seedlings, roots, leaves, flowers, pollen grains, pollen tubes and siliques, and at a lower level in stems.

Its subcellular location is the membrane. The protein localises to the microsome membrane. The catalysed reaction is AMP + H2O + H(+) = IMP + NH4(+). Its pathway is purine metabolism; IMP biosynthesis via salvage pathway; IMP from AMP: step 1/1. Its activity is regulated as follows. Activated by ATP. Activated by sulfate ions (in vitro). Inhibited by phosphate ions. AMP deaminase plays a critical role in energy metabolism. Essential for the transition from zygote to embryo. The polypeptide is AMP deaminase (Arabidopsis thaliana (Mouse-ear cress)).